A 191-amino-acid polypeptide reads, in one-letter code: Thymidine kinase (191 aa).

ATP-binding positions include 15 to 22 (GPMYSGKT) and 88 to 91 (DEAQ). The active-site Proton acceptor is the E89. 4 residues coordinate Zn(2+): C145, C148, C183, and C186.

The protein belongs to the thymidine kinase family. As to quaternary structure, homotetramer.

The protein localises to the cytoplasm. The enzyme catalyses thymidine + ATP = dTMP + ADP + H(+). In Clostridium botulinum (strain Kyoto / Type A2), this protein is Thymidine kinase.